The sequence spans 362 residues: Terpene synthase 3 (362 aa).

Positions 90 to 95 (DDFLER) match the DDxx(x)D/E motif motif. Residues 239–247 (NDCVSYAKE) carry the NDxxSxxxD/E motif motif.

The protein belongs to the terpene synthase family.

The catalysed reaction is (2E,6E)-farnesyl diphosphate = beta-maaliene + diphosphate. It catalyses the reaction (2E,6E)-farnesyl diphosphate = aristolene + diphosphate. It carries out the reaction (2E,6E)-farnesyl diphosphate = calarene + diphosphate. The enzyme catalyses (2E)-geranyl diphosphate = (E)-beta-ocimene + diphosphate. The catalysed reaction is (2E)-geranyl diphosphate = (Z)-beta-ocimene + diphosphate. It catalyses the reaction (2E)-geranyl diphosphate + H2O = linalool + diphosphate. It carries out the reaction (2E)-geranyl diphosphate = beta-myrcene + diphosphate. In terms of biological role, terpene synthase that converts its substrate farnesyl diphosphate (FPP) into an unidentified sesquiterpene as a major product, as well as beta-maaliene, aristolene, calarene and 2 additional unidentified sesquiterpene as minor products. Is also able to convert geranyl diphosphate (GPP) into a mixture of monoterpenes including (Z)-beta-ocimene, (E)-beta-ocimene, allo-ocimene, linalool and beta-myrcene. The sequence is that of Terpene synthase 3 from Dictyostelium discoideum (Social amoeba).